A 420-amino-acid polypeptide reads, in one-letter code: Pyridinium-3,5-bisthiocarboxylic acid mononucleotide nickel insertion protein (420 aa).

The protein belongs to the LarC family.

It catalyses the reaction Ni(II)-pyridinium-3,5-bisthiocarboxylate mononucleotide = pyridinium-3,5-bisthiocarboxylate mononucleotide + Ni(2+). Its function is as follows. Involved in the biosynthesis of a nickel-pincer cofactor ((SCS)Ni(II) pincer complex). Binds Ni(2+), and functions in nickel delivery to pyridinium-3,5-bisthiocarboxylic acid mononucleotide (P2TMN), to form the mature cofactor. Is required for the activation of the lactate racemase LarA. May also be involved in the activation of other nickel-pincer cofactor-dependent enzymes. This is Pyridinium-3,5-bisthiocarboxylic acid mononucleotide nickel insertion protein from Lactiplantibacillus plantarum (strain ATCC BAA-793 / NCIMB 8826 / WCFS1) (Lactobacillus plantarum).